The following is a 307-amino-acid chain: MATITAAMVKDLRESTGAGMMDCKAALTENDGNMEAAQDWLRKKGLSKAAKKSGRVAAEGLIGALTKGTKGVVVEVNSETDFVARNGQFQGLVKMIAQVAFDVGADVEKIKAAKVGDVTIETAINDAIATIGENMTLRRAASLEVSQGVVSHYVHGAVIDGAGKMGVIVALESPGKADELAALGRQIAMHVAAANPLALDPSGLDPAVVKREKDVLADKYRQQGKPENVIEKIVESGLKTYYKEVCLLEQAFIHDTGKSVAQAVKEAEGKVGGAVKIAGFVRYALGEGIEKQESDFAAEVAAASGKK.

The tract at residues T80–V83 is involved in Mg(2+) ion dislocation from EF-Tu.

This sequence belongs to the EF-Ts family.

It is found in the cytoplasm. Functionally, associates with the EF-Tu.GDP complex and induces the exchange of GDP to GTP. It remains bound to the aminoacyl-tRNA.EF-Tu.GTP complex up to the GTP hydrolysis stage on the ribosome. The sequence is that of Elongation factor Ts from Bradyrhizobium diazoefficiens (strain JCM 10833 / BCRC 13528 / IAM 13628 / NBRC 14792 / USDA 110).